The chain runs to 391 residues: Apolipoprotein A-IV (391 aa).

A signal peptide spans 1–20 (MFLKAVVLTVALVAITGTQA). A run of 13 repeats spans residues 33 to 54 (DYFT…KTDV), 60 to 81 (TLFQ…NKLV), 82 to 103 (PFAV…EEIQ), 115 to 136 (PHAN…EHLR), 137 to 158 (PYAT…RQLT), 159 to 180 (PYIQ…SSMV), 181 to 202 (PFAN…GQLT), 203 to 224 (PRAN…SRLA), 225 to 246 (PLAE…FQMK), 247 to 268 (KNAE…KNLA), 269 to 286 (PLVE…EGLQ), 287 to 308 (KSLE…RAVE), and 309 to 330 (PLGD…QQLG). A 13 X 22 AA approximate tandem repeats region spans residues 33-330 (DYFTQLSNNA…QMEKFRQQLG (298 aa)). Ser333 is modified (phosphoserine). The interval 354–391 (FMSTLQKKGSPDQPLALPLPEQVQEQVQEQVQPKPLES) is disordered. The segment covering 371–391 (PLPEQVQEQVQEQVQPKPLES) has biased composition (low complexity).

This sequence belongs to the apolipoprotein A1/A4/E family. In terms of assembly, homodimer. Secreted in plasma.

It is found in the secreted. May have a role in chylomicrons and VLDL secretion and catabolism. Required for efficient activation of lipoprotein lipase by ApoC-II; potent activator of LCAT. Apoa-IV is a major component of HDL and chylomicrons. This Rattus norvegicus (Rat) protein is Apolipoprotein A-IV (Apoa4).